The chain runs to 233 residues: 2-C-methyl-D-erythritol 4-phosphate cytidylyltransferase (233 aa).

It belongs to the IspD/TarI cytidylyltransferase family. IspD subfamily.

It catalyses the reaction 2-C-methyl-D-erythritol 4-phosphate + CTP + H(+) = 4-CDP-2-C-methyl-D-erythritol + diphosphate. Its pathway is isoprenoid biosynthesis; isopentenyl diphosphate biosynthesis via DXP pathway; isopentenyl diphosphate from 1-deoxy-D-xylulose 5-phosphate: step 2/6. Its function is as follows. Catalyzes the formation of 4-diphosphocytidyl-2-C-methyl-D-erythritol from CTP and 2-C-methyl-D-erythritol 4-phosphate (MEP). This chain is 2-C-methyl-D-erythritol 4-phosphate cytidylyltransferase, found in Aromatoleum aromaticum (strain DSM 19018 / LMG 30748 / EbN1) (Azoarcus sp. (strain EbN1)).